We begin with the raw amino-acid sequence, 186 residues long: MVRYAATEIAPAKSARSRGSYLRVSFKNTRETAQAINGWKLQRAQKFLENVLEKKEAVPMRRYAGGTGRAAQGKQFGVSRARWPAKSAEFLLGLLKNAEANADAKGLDTGNLVVKHIQVNQAPKQRRRTYRAHGRINPYMSNPCHIELILTEADEVVQKSEAVVREEAHLSSRQRGARVRRAITAA.

The protein belongs to the universal ribosomal protein uL22 family. In terms of assembly, component of the large ribosomal subunit (LSU). Mature N.crassa ribosomes consist of a small (40S) and a large (60S) subunit. The 40S small subunit contains 1 molecule of ribosomal RNA (18S rRNA) and at least 32 different proteins. The large 60S subunit contains 3 rRNA molecules (26S, 5.8S and 5S rRNA) and at least 42 different proteins.

It localises to the cytoplasm. Its function is as follows. Component of the ribosome, a large ribonucleoprotein complex responsible for the synthesis of proteins in the cell. The small ribosomal subunit (SSU) binds messenger RNAs (mRNAs) and translates the encoded message by selecting cognate aminoacyl-transfer RNA (tRNA) molecules. The large subunit (LSU) contains the ribosomal catalytic site termed the peptidyl transferase center (PTC), which catalyzes the formation of peptide bonds, thereby polymerizing the amino acids delivered by tRNAs into a polypeptide chain. The nascent polypeptides leave the ribosome through a tunnel in the LSU and interact with protein factors that function in enzymatic processing, targeting, and the membrane insertion of nascent chains at the exit of the ribosomal tunnel. The chain is Large ribosomal subunit protein uL22 (rpl-17) from Neurospora crassa (strain ATCC 24698 / 74-OR23-1A / CBS 708.71 / DSM 1257 / FGSC 987).